We begin with the raw amino-acid sequence, 213 residues long: MVFIAVFNGVFAMSSLPGTVLGIKAVNGVVIAGEKRLTYDGYVLSKNTRKVHPITKHVGIGFAGLVGDAQFIIRALRMEAENYELQLGREIRVRGLAKILSLILYSYKLAPLMTEVVVGGFDEKGPQIYVLDPVGSLIEDKYVALGSGGPIALGIIEKEYREDIDVDEAEKLAVSAIREAIERDAVSGDGVDVLRITEEGYSLREYMFRRETS.

Residues 1 to 18 constitute a propeptide, removed in mature form; by autocatalysis; it reads MVFIAVFNGVFAMSSLPG. The Nucleophile role is filled by Thr-19.

It belongs to the peptidase T1B family. In terms of assembly, the 20S proteasome core is composed of 14 alpha and 14 beta subunits that assemble into four stacked heptameric rings, resulting in a barrel-shaped structure. The two inner rings, each composed of seven catalytic beta subunits, are sandwiched by two outer rings, each composed of seven alpha subunits. The catalytic chamber with the active sites is on the inside of the barrel. Has a gated structure, the ends of the cylinder being occluded by the N-termini of the alpha-subunits. Is capped at one or both ends by the proteasome regulatory ATPase, PAN.

It is found in the cytoplasm. It catalyses the reaction Cleavage of peptide bonds with very broad specificity.. Its activity is regulated as follows. The formation of the proteasomal ATPase PAN-20S proteasome complex, via the docking of the C-termini of PAN into the intersubunit pockets in the alpha-rings, triggers opening of the gate for substrate entry. Interconversion between the open-gate and close-gate conformations leads to a dynamic regulation of the 20S proteasome proteolysis activity. Its function is as follows. Component of the proteasome core, a large protease complex with broad specificity involved in protein degradation. This chain is Proteasome subunit beta 1, found in Staphylothermus marinus (strain ATCC 43588 / DSM 3639 / JCM 9404 / F1).